A 438-amino-acid polypeptide reads, in one-letter code: MTTMATAAPVRASQAWYKILYVQVLIAILIGAMVGCLWPSVATNDWVKALGDGFIKLIKMVIAPIIFCTVTSGIAHIQDAKKVGCVGVKALFYFEIVSSFALLLGLAMGNLVRIGHGLAVKPDAAAVANYVKQAEASKTVDFILNIIPDSVVGAFARGDVLQVLLFAILFGFSLMALGKRGERLRGMIDDVAHAVFGVIAIVMKAAPIGAFGAMAFTVGKFGPAALGNLIGLIALFYVTAALFVVVVLGLIARLVGFSIFKFLIYIKDELLIVLGTSSSESALPQLMEKLERLGCSKPVVGLVVPTGYSFNLDGTNIYMTLATLFIAQALGVDLSFGQQLTILLVAMLTSKGASGVTGAGFITLAATLSVVNPALVPGMAIVFSIDKFMSEVRALTNIIGNGIAAVFVSWWESELDHVTLQTRLNKSTASTTIDTTST.

The next 8 membrane-spanning stretches (helical) occupy residues 20–42, 57–77, 90–112, 160–179, 192–214, 229–251, 324–346, and 361–383; these read LYVQ…PSVA, LIKM…IAHI, ALFY…GNLV, VLQV…ALGK, AHAV…FGAM, LIGL…LGLI, LFIA…LLVA, and FITL…AIVF.

It belongs to the dicarboxylate/amino acid:cation symporter (DAACS) (TC 2.A.23) family.

It localises to the cell inner membrane. Its function is as follows. Responsible for the transport of dicarboxylates such as succinate, fumarate, and malate from the periplasm across the membrane. In Bradyrhizobium diazoefficiens (strain JCM 10833 / BCRC 13528 / IAM 13628 / NBRC 14792 / USDA 110), this protein is C4-dicarboxylate transport protein 1.